We begin with the raw amino-acid sequence, 204 residues long: Small ribosomal subunit protein uS4 (204 aa).

The interval Gly21–Ser45 is disordered. In terms of domain architecture, S4 RNA-binding spans Arg93–Val156.

It belongs to the universal ribosomal protein uS4 family. Part of the 30S ribosomal subunit. Contacts protein S5. The interaction surface between S4 and S5 is involved in control of translational fidelity.

One of the primary rRNA binding proteins, it binds directly to 16S rRNA where it nucleates assembly of the body of the 30S subunit. Its function is as follows. With S5 and S12 plays an important role in translational accuracy. The chain is Small ribosomal subunit protein uS4 from Acidiphilium cryptum (strain JF-5).